Reading from the N-terminus, the 260-residue chain is Purine nucleoside phosphorylase XF_0940 (260 aa).

H79, C120, and H137 together coordinate Zn(2+).

It belongs to the purine nucleoside phosphorylase YfiH/LACC1 family. Homodimer. Cu(2+) serves as cofactor. Requires Zn(2+) as cofactor.

It catalyses the reaction adenosine + phosphate = alpha-D-ribose 1-phosphate + adenine. It carries out the reaction S-methyl-5'-thioadenosine + phosphate = 5-(methylsulfanyl)-alpha-D-ribose 1-phosphate + adenine. The catalysed reaction is inosine + phosphate = alpha-D-ribose 1-phosphate + hypoxanthine. The enzyme catalyses adenosine + H2O + H(+) = inosine + NH4(+). Its function is as follows. Purine nucleoside enzyme that catalyzes the phosphorolysis of adenosine and inosine nucleosides, yielding D-ribose 1-phosphate and the respective free bases, adenine and hypoxanthine. Also catalyzes the phosphorolysis of S-methyl-5'-thioadenosine into adenine and S-methyl-5-thio-alpha-D-ribose 1-phosphate. Also has adenosine deaminase activity. This chain is Purine nucleoside phosphorylase XF_0940, found in Xylella fastidiosa (strain 9a5c).